The following is a 141-amino-acid chain: Large ribosomal subunit protein uL11 (141 aa).

The protein belongs to the universal ribosomal protein uL11 family. In terms of assembly, part of the ribosomal stalk of the 50S ribosomal subunit. Interacts with L10 and the large rRNA to form the base of the stalk. L10 forms an elongated spine to which L12 dimers bind in a sequential fashion forming a multimeric L10(L12)X complex. Post-translationally, one or more lysine residues are methylated.

Forms part of the ribosomal stalk which helps the ribosome interact with GTP-bound translation factors. In Lactobacillus johnsonii (strain CNCM I-12250 / La1 / NCC 533), this protein is Large ribosomal subunit protein uL11.